Reading from the N-terminus, the 59-residue chain is UPF0509 protein YciZ (59 aa).

The protein belongs to the UPF0509 family.

The sequence is that of UPF0509 protein YciZ from Salmonella agona (strain SL483).